A 291-amino-acid polypeptide reads, in one-letter code: AA14 family lytic polysaccharide monooxygenase (291 aa).

A signal peptide spans 1–17 (MLTTAILFTSLAGSAYA). A glycan (N-linked (GlcNAc...) asparagine) is linked at N141. Cystine bridges form between C192–C197, C199–C220, and C240–C247.

Belongs to the polysaccharide monooxygenase AA14 family. It depends on Cu(2+) as a cofactor.

Its subcellular location is the secreted. Lytic polysaccharide monooxygenase (LPMO) that is active against heteroxylan, xyloglucan and cellulose in beta-cellulose and released native oligosaccharides and corresponding C1- and/or C4-oxidized products. May act mainly on heteroxylan with numerous arabinosyl substituents between cellulose fibers rather than on recalcitrant xylan tightly associated with cellulose. Catalysis by LPMOs requires the reduction of the active-site copper from Cu(II) to Cu(I) by a reducing agent and H(2)O(2) or O(2) as a cosubstrate. Shows a branched chain preference, and has synergistic effects with the Penicillium parvum debranching enzyme ABF62C in an enzyme- and ascorbic acid-dependent manner. Also has synergistic effects with the Penicillium parvum GH10 endoxylanase XYN1, and the degree of synergy was greater with step-by-step addition than with simultaneous addition. The polypeptide is AA14 family lytic polysaccharide monooxygenase (Sordaria brevicollis).